The sequence spans 237 residues: Isoprenyl transferase (237 aa).

Aspartate 14 is an active-site residue. Aspartate 14 serves as a coordination point for Mg(2+). Residues 15 to 18, tryptophan 19, arginine 27, histidine 31, and 59 to 61 each bind substrate; these read GNGR and STE. The active-site Proton acceptor is the asparagine 62. Substrate-binding positions include tryptophan 63, arginine 65, arginine 184, and 190–192; that span reads RIS. Residue glutamate 203 coordinates Mg(2+).

The protein belongs to the UPP synthase family. Homodimer. Mg(2+) serves as cofactor.

Functionally, catalyzes the condensation of isopentenyl diphosphate (IPP) with allylic pyrophosphates generating different type of terpenoids. This is Isoprenyl transferase from Helicobacter hepaticus (strain ATCC 51449 / 3B1).